The sequence spans 160 residues: MKTIIAVTIFGILTCAYAAEGDDCSIEKAMGDFKPEEFFNGTWYLAHGPGVTSPAVCQKFTTSGSKGFTQIVEIGYNKFESNVKFQCNQVDNKNGEQYSFKCKSSDNTEFEADFTFISVSYDNFALVCRSITFTSQPKEDDYLVLERTKSDTDPDAKEIC.

Positions 1 to 18 are cleaved as a signal peptide; it reads MKTIIAVTIFGILTCAYA. 3 disulfides stabilise this stretch: cysteine 24/cysteine 128, cysteine 57/cysteine 160, and cysteine 87/cysteine 102.

The protein belongs to the calycin superfamily. Triabin family. As to expression, expressed in salivary glands.

It is found in the secreted. Functionally, thrombin inhibitor. Forms a non-covalent complex with thrombin at a molar ratio of 1:1. Inhibits thrombin-induced platelet aggregation. Prolongs thrombin clotting time and activated partial thromboplastin time. It only minimally suppresses the amidolytic activity of thrombin. Inhibits thrombin-mediated fibrin formation in the host. Inhibits thrombin-induced endothelium-dependent relaxant and contractile responses in host blood vessels. Inhibits thrombin-induced mitogenesis in host vascular smooth muscle cells. This is Triabin from Meccus pallidipennis (Triatomine bug).